Consider the following 200-residue polypeptide: Holliday junction branch migration complex subunit RuvA (200 aa).

The domain I stretch occupies residues 1–65; that stretch reads MYEYIKGTLT…ETEHVLYGFS (65 aa). The tract at residues 66–144 is domain II; that stretch reads SRAERECFRL…TLMPLYLEEP (79 aa). The interval 145–149 is flexible linker; the sequence is VVPSS. The tract at residues 150–200 is domain III; the sequence is TANSSFKEGIGALMNLGFSRLAADRMMTEAVKELSEEASVAELLPIALRKS.

The protein belongs to the RuvA family. As to quaternary structure, homotetramer. Forms an RuvA(8)-RuvB(12)-Holliday junction (HJ) complex. HJ DNA is sandwiched between 2 RuvA tetramers; dsDNA enters through RuvA and exits via RuvB. An RuvB hexamer assembles on each DNA strand where it exits the tetramer. Each RuvB hexamer is contacted by two RuvA subunits (via domain III) on 2 adjacent RuvB subunits; this complex drives branch migration. In the full resolvosome a probable DNA-RuvA(4)-RuvB(12)-RuvC(2) complex forms which resolves the HJ.

The protein localises to the cytoplasm. In terms of biological role, the RuvA-RuvB-RuvC complex processes Holliday junction (HJ) DNA during genetic recombination and DNA repair, while the RuvA-RuvB complex plays an important role in the rescue of blocked DNA replication forks via replication fork reversal (RFR). RuvA specifically binds to HJ cruciform DNA, conferring on it an open structure. The RuvB hexamer acts as an ATP-dependent pump, pulling dsDNA into and through the RuvAB complex. HJ branch migration allows RuvC to scan DNA until it finds its consensus sequence, where it cleaves and resolves the cruciform DNA. This Chlamydia trachomatis serovar D (strain ATCC VR-885 / DSM 19411 / UW-3/Cx) protein is Holliday junction branch migration complex subunit RuvA.